The sequence spans 416 residues: Phosphoglycerate kinase (416 aa).

Residues 24 to 26 (DLN), arginine 40, 63 to 66 (HLGR), arginine 122, and arginine 162 each bind substrate. ATP is bound by residues lysine 212, glycine 300, glutamate 331, and 360–363 (GGDS).

It belongs to the phosphoglycerate kinase family. In terms of assembly, monomer.

Its subcellular location is the cytoplasm. The enzyme catalyses (2R)-3-phosphoglycerate + ATP = (2R)-3-phospho-glyceroyl phosphate + ADP. The protein operates within carbohydrate degradation; glycolysis; pyruvate from D-glyceraldehyde 3-phosphate: step 2/5. The protein is Phosphoglycerate kinase of Mycobacterium ulcerans (strain Agy99).